The primary structure comprises 677 residues: Methionine--tRNA ligase (677 aa).

Positions P15–H25 match the 'HIGH' region motif. 4 residues coordinate Zn(2+): C146, C149, C159, and C162. The 'KMSKS' region signature appears at K333–S337. K336 lines the ATP pocket. Residues D575–K677 enclose the tRNA-binding domain.

It belongs to the class-I aminoacyl-tRNA synthetase family. MetG type 1 subfamily. Homodimer. Zn(2+) serves as cofactor.

The protein resides in the cytoplasm. The catalysed reaction is tRNA(Met) + L-methionine + ATP = L-methionyl-tRNA(Met) + AMP + diphosphate. In terms of biological role, is required not only for elongation of protein synthesis but also for the initiation of all mRNA translation through initiator tRNA(fMet) aminoacylation. The sequence is that of Methionine--tRNA ligase from Salmonella paratyphi A (strain AKU_12601).